Here is a 339-residue protein sequence, read N- to C-terminus: Phenylalanine--tRNA ligase alpha subunit (339 aa).

E254 is a binding site for Mg(2+).

The protein belongs to the class-II aminoacyl-tRNA synthetase family. Phe-tRNA synthetase alpha subunit type 1 subfamily. As to quaternary structure, tetramer of two alpha and two beta subunits. It depends on Mg(2+) as a cofactor.

Its subcellular location is the cytoplasm. It catalyses the reaction tRNA(Phe) + L-phenylalanine + ATP = L-phenylalanyl-tRNA(Phe) + AMP + diphosphate + H(+). The sequence is that of Phenylalanine--tRNA ligase alpha subunit from Clostridium perfringens (strain ATCC 13124 / DSM 756 / JCM 1290 / NCIMB 6125 / NCTC 8237 / Type A).